Consider the following 396-residue polypeptide: Tyrosine--tRNA ligase (396 aa).

The 'HIGH' region motif lies at 43–52 (PTAPDIHLGH). The short motif at 227 to 231 (KMSKS) is the 'KMSKS' region element. Residue lysine 230 participates in ATP binding. The region spanning 335 to 395 (IGLATLLKEA…GKRKFARVTV (61 aa)) is the S4 RNA-binding domain.

The protein belongs to the class-I aminoacyl-tRNA synthetase family. TyrS type 2 subfamily. As to quaternary structure, homodimer.

The protein resides in the cytoplasm. It catalyses the reaction tRNA(Tyr) + L-tyrosine + ATP = L-tyrosyl-tRNA(Tyr) + AMP + diphosphate + H(+). Its function is as follows. Catalyzes the attachment of tyrosine to tRNA(Tyr) in a two-step reaction: tyrosine is first activated by ATP to form Tyr-AMP and then transferred to the acceptor end of tRNA(Tyr). The polypeptide is Tyrosine--tRNA ligase (Haemophilus ducreyi (strain 35000HP / ATCC 700724)).